The primary structure comprises 153 residues: Coiled-coil domain-containing protein 182 (153 aa).

The stretch at 46–109 (ADLEILQQKV…RLREEEDRGI (64 aa)) forms a coiled coil.

In Homo sapiens (Human), this protein is Coiled-coil domain-containing protein 182 (CCDC182).